Reading from the N-terminus, the 469-residue chain is Pancreatic lipase-related protein 2 (469 aa).

An N-terminal signal peptide occupies residues 1–17 (MLPPWTLGLLLLATVRG). C21 and C27 are disulfide-bonded. Positions 93–105 (IHGFLDKAEDSWP) are required for galactolipase activity. Residues C109 and C120 are joined by a disulfide bond. S171 acts as the Nucleophile in catalysis. Catalysis depends on D195, which acts as the Charge relay system. Ca(2+)-binding residues include E206, R209, D211, and D214. A disulfide bridge links C256 with C280. The interval 257–279 (KKNVLSTITDIDGIWEGIGGFVS) is required for galactolipase activity. The Charge relay system role is filled by H282. Disulfide bonds link C304-C315 and C318-C323. N-linked (GlcNAc...) asparagine glycosylation is found at N353 and N428. In terms of domain architecture, PLAT spans 357–469 (WRYKISVTLS…ENVLQSLYPC (113 aa)). A disulfide bridge connects residues C453 and C469.

It belongs to the AB hydrolase superfamily. Lipase family. As to expression, pancreas.

Its subcellular location is the secreted. The protein resides in the zymogen granule membrane. It localises to the cell projection. It is found in the neuron projection. The catalysed reaction is a triacylglycerol + H2O = a diacylglycerol + a fatty acid + H(+). It catalyses the reaction a 1,2-diacyl-3-O-(beta-D-galactosyl)-sn-glycerol + 2 H2O = 3-beta-D-galactosyl-sn-glycerol + 2 a fatty acid + 2 H(+). It carries out the reaction 1,2,3-tri-(9Z-octadecenoyl)-glycerol + H2O = di-(9Z)-octadecenoylglycerol + (9Z)-octadecenoate + H(+). The enzyme catalyses di-(9Z)-octadecenoylglycerol + H2O = (9Z-octadecenoyl)-glycerol + (9Z)-octadecenoate + H(+). The catalysed reaction is (9Z-octadecenoyl)-glycerol + H2O = glycerol + (9Z)-octadecenoate + H(+). It catalyses the reaction 1-(9Z-octadecenoyl)-glycerol + H2O = glycerol + (9Z)-octadecenoate + H(+). It carries out the reaction 1,2,3-tripropanoylglycerol + H2O = dipropanoylglycerol + propanoate + H(+). The enzyme catalyses 1,2,3-tributanoylglycerol + H2O = dibutanoylglycerol + butanoate + H(+). The catalysed reaction is 1,2,3-trioctanoylglycerol + H2O = dioctanoylglycerol + octanoate + H(+). It catalyses the reaction 1,2-didecanoylglycerol + H2O = decanoylglycerol + decanoate + H(+). It carries out the reaction long chain 1,2-diacyl-3-O-beta-D-galactosyl-sn-glycerol + H2O = long chain acyl-3-O-beta-D-galactosyl-sn-glycerol + a fatty acid + H(+). The enzyme catalyses 1,2-dioctanoyl-3-O-beta-D-galactosyl-sn-glycerol + H2O = octanoyl-3-(beta-D-galactosyl)-sn-glycerol + octanoate + H(+). The catalysed reaction is 1,2-didodecanoyl-3-beta-D-galactosyl-sn-glycerol + H2O = dodecanoyl-3-beta-D-galactosyl-sn-glycerol + dodecanoate + H(+). It catalyses the reaction 1-beta-D-galactosyl-2,3-didodecanoyl-sn-glycerol + H2O = 1-beta-D-galactosyl-dodecanoyl-sn-glycerol + dodecanoate + H(+). It carries out the reaction a 1,2-diacyl-3-O-[alpha-D-galactosyl-(1-&gt;6)-beta-D-galactosyl]-sn-glycerol + H2O = acyl-3-O-[alpha-D-galactosyl-(1-&gt;6)-beta-D-galactosyl]-sn-glycerol + a fatty acid + H(+). The enzyme catalyses long chain 1,2-diacyl-3-O-[alpha-D-galactosyl-(1-&gt;6)-beta-D-galactosyl]-sn-glycerol + H2O = long chain acyl-3-O-[alpha-D-galactosyl-(1-&gt;6)-beta-D-galactosyl]-sn-glycerol + a fatty acid + H(+). The catalysed reaction is 1,2-dioctanoyl-3-O-[alpha-D-galactosyl-(1-&gt;6)-beta-D-galactosyl]-sn-glycerol + H2O = octanoyl-3-O-[alpha-D-galactosyl-(1-&gt;6)-beta-D-galactosyl]-sn-glycerol + octanoate + H(+). It catalyses the reaction 1,2-didodecanoyl-3-O-[alpha-D-galactosyl-(1-&gt;6)-beta-D-galactosyl]-sn-glycerol + H2O = dodecanoyl-3-O-[alpha-D-galactosyl-(1-&gt;6)-beta-D-galactosyl]-sn-glycerol + dodecanoate + H(+). It carries out the reaction a 1,2-diacyl-sn-glycero-3-phosphocholine + H2O = a monoacyl-sn-glycero-3-phosphocholine + a fatty acid + H(+). Its pathway is glycerolipid metabolism; triacylglycerol degradation. It participates in glycolipid metabolism. Its activity is regulated as follows. Regulated by CLPS and bile salts levels ranging 1-5 mM in neonates and 2-30 mM in healthy adults. CLPS stimulates milk fat digestion in the presence of 4 mM bile salts. Triacylglycerol lipase activity toward short- and medium-chain triglycerides is inhibited by increasing concentrations of bile salts and weakly reactivated by CLPS. Optimal triacylglycerol lipase activity is reached at bile salts concentrations ranging from 0.1 to 0.5 mM and then decreases at concentrations higher than 1 mM. Lipase activity toward long-chain glycerolipids is stimulated by CLPS in the presence of 4 mM bile salts. Galactolipase activity is inhibited at high concentrations of bile salts. Triacylglycerol lipase activity is inhibited by anti-obesity drug tetrahydrolipstatin. In terms of biological role, lipase that primarily hydrolyzes triglycerides and galactosylglycerides. In neonates, may play a major role in pancreatic digestion of dietary fats such as milk fat globules enriched in long-chain triglycerides. Hydrolyzes short-, medium- and long-chain fatty acyls in triglycerides without apparent positional specificity. Can completely deacylate triacylglycerols. When the liver matures and bile salt synthesis increases, likely functions mainly as a galactolipase and monoacylglycerol lipase. Hydrolyzes monogalactosyldiglycerols (MGDG) and digalactosyldiacylglycerols (DGDG) present in a plant-based diet, releasing long-chain polyunsaturated fatty acids. Hydrolyzes medium- and long-chain fatty acyls in galactolipids. May act together with LIPF to hydrolyze partially digested triglycerides. Hydrolyzes long-chain monoglycerides with high efficiency. In cytotoxic T cells, contributes to perforin-dependent cell lysis, but is unlikely to mediate direct cytotoxicity. Also has low phospholipase activity. In neurons, required for the localization of the phospholipid 1-oleoyl-2-palmitoyl-PC (OPPC) to neurite tips through acyl chain remodeling of membrane phospholipids. The resulting OPPC-rich lipid membrane domain recruits the t-SNARE protein STX4 by selectively interacting with the STX4 transmembrane domain and this promotes surface expression of the dopamine transporter SLC6A3/DAT at neurite tips by facilitating fusion of SLC6A3-containing transport vesicles with the plasma membrane. The polypeptide is Pancreatic lipase-related protein 2 (Homo sapiens (Human)).